The primary structure comprises 185 residues: Ribosome-recycling factor (185 aa).

Belongs to the RRF family.

It is found in the cytoplasm. Its function is as follows. Responsible for the release of ribosomes from messenger RNA at the termination of protein biosynthesis. May increase the efficiency of translation by recycling ribosomes from one round of translation to another. The chain is Ribosome-recycling factor from Ectopseudomonas mendocina (strain ymp) (Pseudomonas mendocina).